A 61-amino-acid chain; its full sequence is Large ribosomal subunit protein eL37 (61 aa).

4 residues coordinate Zn(2+): Cys19, Cys22, Cys34, and Cys37. The C4-type zinc finger occupies 19 to 37; the sequence is CRRCGRNSFNARKGYCAAC.

The protein belongs to the eukaryotic ribosomal protein eL37 family. Requires Zn(2+) as cofactor.

Binds to the 23S rRNA. In Sulfolobus acidocaldarius (strain ATCC 33909 / DSM 639 / JCM 8929 / NBRC 15157 / NCIMB 11770), this protein is Large ribosomal subunit protein eL37.